A 306-amino-acid chain; its full sequence is Agmatinase (306 aa).

Residues His-126, Asp-149, His-151, Asp-153, Asp-230, and Asp-232 each coordinate Mn(2+).

Belongs to the arginase family. Agmatinase subfamily. Requires Mn(2+) as cofactor.

It carries out the reaction agmatine + H2O = urea + putrescine. Its pathway is amine and polyamine biosynthesis; putrescine biosynthesis via agmatine pathway; putrescine from agmatine: step 1/1. Its function is as follows. Catalyzes the formation of putrescine from agmatine. The sequence is that of Agmatinase from Escherichia coli O7:K1 (strain IAI39 / ExPEC).